A 400-amino-acid polypeptide reads, in one-letter code: Dual specificity mitogen-activated protein kinase kinase 2 (400 aa).

M1 carries the post-translational modification N-acetylmethionine. The residue at position 23 (S23) is a Phosphoserine. Residues 72–369 (FERISELGAG…LKLLTNHAFI (298 aa)) enclose the Protein kinase domain. Residues 78–86 (LGAGNGGVV) and K101 each bind ATP. D194 acts as the Proton acceptor in catalysis. Phosphoserine; by RAF is present on residues S222 and S226. The tract at residues 282–310 (PVVDGADGEPHSVSPRPRPPGRPISGHGM) is disordered. 3 positions are modified to phosphoserine: S293, S295, and S306. Phosphothreonine is present on residues T394 and T396.

Belongs to the protein kinase superfamily. STE Ser/Thr protein kinase family. MAP kinase kinase subfamily. In terms of assembly, interacts with MORG1. Interacts with SGK1. Interacts with KSR1. Interacts with KSR1 and BRAF; the interaction with KSR1 mediates KSR1-BRAF dimerization. Interacts with GLS. The cofactor is Mg(2+). MAPKK is itself dependent on Ser/Thr phosphorylation for activity catalyzed by MAP kinase kinase kinases (RAF or MEKK1). Phosphorylated by MAP2K1/MEK1. In terms of tissue distribution, expressed abundantly in the adult brain and muscle.

It is found in the cytoplasm. The protein localises to the membrane. It catalyses the reaction L-seryl-[protein] + ATP = O-phospho-L-seryl-[protein] + ADP + H(+). It carries out the reaction L-threonyl-[protein] + ATP = O-phospho-L-threonyl-[protein] + ADP + H(+). The catalysed reaction is L-tyrosyl-[protein] + ATP = O-phospho-L-tyrosyl-[protein] + ADP + H(+). Functionally, catalyzes the concomitant phosphorylation of a threonine and a tyrosine residue in a Thr-Glu-Tyr sequence located in MAP kinases. Activates the ERK1 and ERK2 MAP kinases. Activates BRAF in a KSR1 or KSR2-dependent manner; by binding to KSR1 or KSR2 releases the inhibitory intramolecular interaction between KSR1 or KSR2 protein kinase and N-terminal domains which promotes KSR1 or KSR2-BRAF dimerization and BRAF activation. This chain is Dual specificity mitogen-activated protein kinase kinase 2 (Map2k2), found in Rattus norvegicus (Rat).